A 339-amino-acid polypeptide reads, in one-letter code: MamK-like protein (339 aa).

ATP is bound by residues 18–19, D74, 162–164, and 216–220; these read YS, AWT, and KEQFA.

Belongs to the FtsA/MreB family. MamK subfamily. Forms cytoplasmic filament polymers. Forms filaments with MamK.

It localises to the cytoplasm. It is found in the cytoskeleton. The catalysed reaction is ATP + H2O = ADP + phosphate + H(+). Its function is as follows. Protein with ATPase activity which forms pole-to-pole filaments in vivo, probably with MamK. Efficient filament formation requires MamK. Probably promotes turnover of MamK filaments, by providing a monomer pool. In vivo, in the absence of its paralog MamK, forms thin filaments from pole to pole. In vitro forms straight filaments and bundles in the absence of ATP. Filament formation is triggered by KCl and MgCl(2); polymerizes more slowly and makes thinner filaments than MamK. Expression in E.coli yields a filament in the cell's longitudinal axis; the protein nucleates at one pole or the cell septum. The polypeptide is MamK-like protein (Paramagnetospirillum magneticum (strain ATCC 700264 / AMB-1) (Magnetospirillum magneticum)).